Consider the following 37-residue polypeptide: Large ribosomal subunit protein bL36c (37 aa).

This sequence belongs to the bacterial ribosomal protein bL36 family.

Its subcellular location is the plastid. The protein localises to the chloroplast. This Liriodendron tulipifera (Tuliptree) protein is Large ribosomal subunit protein bL36c.